Consider the following 141-residue polypeptide: Hemoglobin subunit alpha-D (141 aa).

The 141-residue stretch at Met1 to Arg141 folds into the Globin domain. His58 and His87 together coordinate heme b.

This sequence belongs to the globin family. Heterotetramer of two alpha-D chains and two beta chains. In terms of tissue distribution, red blood cells.

Functionally, involved in oxygen transport from the lung to the various peripheral tissues. The polypeptide is Hemoglobin subunit alpha-D (HBAD) (Chelonoidis carbonarius (Red-footed tortoise)).